The sequence spans 782 residues: Beta-mannosyltransferase 9 (782 aa).

At 1–26 (MEKLIQSTISLFISLSLKISTKSYKS) the chain is on the cytoplasmic side. A helical membrane pass occupies residues 27–47 (IISILFIISLLSIILTTTITV). At 48–782 (YHDPERIITT…GKDKGKDKSN (735 aa)) the chain is on the extracellular side. Residues 66–96 (KSVFTASSPKQQDKLQQEIDQHQSDNSHEQQ) are disordered. Residues 76–96 (QQDKLQQEIDQHQSDNSHEQQ) are compositionally biased toward basic and acidic residues. Residues N445, N648, and N699 are each glycosylated (N-linked (GlcNAc...) asparagine).

This sequence belongs to the BMT family.

It localises to the membrane. Functionally, beta-mannosyltransferase involved in cell wall biosynthesis through beta-1,2-mannosylation of cell wall phosphopeptidomannan. The chain is Beta-mannosyltransferase 9 (BMT9) from Candida albicans (strain SC5314 / ATCC MYA-2876) (Yeast).